The following is a 78-amino-acid chain: Large ribosomal subunit protein bL28 (78 aa).

It belongs to the bacterial ribosomal protein bL28 family.

The polypeptide is Large ribosomal subunit protein bL28 (Acaryochloris marina (strain MBIC 11017)).